Here is an 890-residue protein sequence, read N- to C-terminus: MIKNRFILILVIVALTVSLLSFLLAFCTDWLFFVETGFTSVFTTKLYAQAGSGLLFAGVLFAGTLLNLLLAGKAVFPTYATPREAGDFRPRLDEARRLVKPLGIPACAILALLVGQWGAMQWEKLLFFVNRVSVGTTDPVMGRDIGFYLFTLPLMETITAFAGFTLLTSLFLTVLVYTVRGGICLSERGVAIDGTVRRHLAILLLLLSCVIAAGFHLDCFRLLFSSNGIFHGAGYTDVHSRLPTYRILTILAPLAGTALAIGLWKGAWRMALLAPLAVIVLHVIGIRVYPGLLQKFKVAPNELALEAPYIRNNIALTRLGFDLDKIETIPFDVDTQLSSADIARNDATIKNIRLWDHAPLLKTYSQLQQIRTYYRFFDVDNDRYLVNGRYSQVMLSPRELSYADLPSRNWINERLIFTHGNGITFGPVSRISKEGLPEFFVKDIPAVSLADIRVTRPEIYFGELSNEYVIVRTRVPEFSYPTSSGNINTTYAGTGGVPMDSLAKRMLFAARFRTEKILLSSDITSQSSIIFNRNINERVRAVAPFLHFDDDPYMVVDDRGRLKWIIDAYTFSDRLPCSKPIKGGVNYMRNSVKAVVDAYDGTLAFYISDPHDVLIRVYDRMFPGLFRPISAMPDDLRRHVRYPHHFLQLQAAMYTAYHMTDPKVFYNKENLWQVPALGEKPMEPYYTIMKLPGETAEEYILLLPFTPSKRDNLAAWLTARSDGANYGKIRAYTFPRDRLIYGPKQIDARINQDSFISQQLTLWNQRGSEVIRGSLLVIPIEKSLLYVQPLFLAADKAGLPELKRVIVAFGDQVVMEENLEQALQRLFGGKRAPEPASSATAKDSTTSPALLAKEAMAAYEKAISQQRQGNWSGYGEELRRLEQILRRMAQ.

7 consecutive transmembrane segments (helical) span residues 6–26, 50–70, 102–122, 157–177, 200–220, 244–264, and 266–286; these read FILI…LLAF, AGSG…NLLL, LGIP…AMQW, TITA…VLVY, LAIL…LDCF, TYRI…IGLW, and GAWR…VIGI.

Belongs to the UPF0182 family.

The protein localises to the cell membrane. In Pelobacter propionicus (strain DSM 2379 / NBRC 103807 / OttBd1), this protein is UPF0182 protein Ppro_2689.